The primary structure comprises 312 residues: Olfactory receptor 6N1 (312 aa).

Residues 1-25 lie on the Extracellular side of the membrane; the sequence is MDTGNWSQVAEFIILGFPHLQGVQI. N-linked (GlcNAc...) asparagine glycosylation is present at N5. A helical transmembrane segment spans residues 26–46; sequence YLFLLLLLIYLMTVLGNLLIF. Residues 47–54 lie on the Cytoplasmic side of the membrane; sequence LVVCLDSR. Residues 55-75 form a helical membrane-spanning segment; it reads LHTPMYHFVSILSFSELGYTA. Residues 76 to 99 lie on the Extracellular side of the membrane; it reads ATIPKMLANLLSEKKTISFSGCLL. A disulfide bond links C97 and C189. Residues 100–120 form a helical membrane-spanning segment; the sequence is QIYFFHSLGATECYLLTAMAY. Residues 121-139 lie on the Cytoplasmic side of the membrane; that stretch reads DRYLAICRPLHYPTLMTPT. The chain crosses the membrane as a helical span at residues 140–160; that stretch reads LCAEIAIGCWLGGLAGPVVEI. The Extracellular portion of the chain corresponds to 161 to 197; sequence SLISRLPFCGPNRIQHVFCDFPPVLSLACTDTSINVL. A helical membrane pass occupies residues 198–217; that stretch reads VDFVINSCKILATFLLILCS. Over 218–237 the chain is Cytoplasmic; the sequence is YVQIICTVLRIPSAAGKRKA. A helical membrane pass occupies residues 238–258; the sequence is ISTCASHFTVVLIFYGSILSM. The Extracellular portion of the chain corresponds to 259-271; sequence YVQLKKSYSLDYD. The chain crosses the membrane as a helical span at residues 272–292; it reads QALAVVYSVLTPFLNPFIYSL. Topologically, residues 293-312 are cytoplasmic; the sequence is RNKEIKEAVRRQLKRIGILA.

The protein belongs to the G-protein coupled receptor 1 family.

It localises to the cell membrane. In terms of biological role, odorant receptor. The protein is Olfactory receptor 6N1 (OR6N1) of Homo sapiens (Human).